Consider the following 62-residue polypeptide: MTIAFQLAVFALIATSSILLISVPVVFSSPDGWSSNKNVVFSGTSLWIGLVFLVGILNSLIS.

2 helical membrane-spanning segments follow: residues 8–28 (AVFA…VVFS) and 41–61 (FSGT…NSLI).

Belongs to the PsbZ family. In terms of assembly, PSII is composed of 1 copy each of membrane proteins PsbA, PsbB, PsbC, PsbD, PsbE, PsbF, PsbH, PsbI, PsbJ, PsbK, PsbL, PsbM, PsbT, PsbY, PsbZ, Psb30/Ycf12, at least 3 peripheral proteins of the oxygen-evolving complex and a large number of cofactors. It forms dimeric complexes.

The protein localises to the plastid. It is found in the chloroplast thylakoid membrane. May control the interaction of photosystem II (PSII) cores with the light-harvesting antenna, regulates electron flow through the 2 photosystem reaction centers. PSII is a light-driven water plastoquinone oxidoreductase, using light energy to abstract electrons from H(2)O, generating a proton gradient subsequently used for ATP formation. In Populus alba (White poplar), this protein is Photosystem II reaction center protein Z.